We begin with the raw amino-acid sequence, 545 residues long: Aclacinomycin-N/aclacinomycin-A oxidase (545 aa).

A signal peptide (tat-type signal) is located at residues 1–43 (MFVLNEFTRRGFLGTAAAVGGTTVVTTALGGAPAAQAAVPEAA). The FAD-binding PCMH-type domain occupies 76-256 (FRGRPDVVYV…TRYWFRTPGA (181 aa)). Residues 113-173 (HCFEGFVDDP…WGVTIPAGVC (61 aa)) constitute a cross-link (6-(S-cysteinyl)-8alpha-(pros-histidyl)-FAD (His-Cys)). The Proton acceptor role is filled by Tyr-421. Thr-451 is a binding site for aclacinomycin Y. Asn-492 contacts FAD. Catalysis depends on Tyr-493, which acts as the Proton acceptor. Tyr-493 contacts aclacinomycin Y.

It belongs to the oxygen-dependent FAD-linked oxidoreductase family. Homotetramer; dimer of dimers. FAD serves as cofactor. In terms of processing, predicted to be exported by the Tat system. The position of the signal peptide cleavage has been experimentally proven. The FAD cofactor is bound via a bicovalent 6-S-cysteinyl, 8alpha-N1-histidyl FAD linkage.

It carries out the reaction aclacinomycin N + O2 = aclacinomycin A + H2O2. The catalysed reaction is aclacinomycin A + O2 = aclacinomycin Y + H2O2. With respect to regulation, inhibited by ascorbic acid and iron ion. Its function is as follows. Involved in the modification of the terminal sugar residues in the last two steps in the biosynthesis of polyketide antibiotics of the aclacinomycin group. In the first reaction, it catalyzes the oxidation of the hydroxyl group at carbon C4 of the L-rhodinose terminal sugar moiety of aclacinomycin N (AclN) to a keto group, modifying the sugar to cinerulose A and generating aclacinomycin A (AclA). In the second reaction, it catalyzes the elimination of two hydrogen atoms from cinerulose A, leading to a double bond between carbon atoms C2 and C3 and the generation of the L-aculose terminal sugar moiety of aclacinomycin Y (AclY). It can also use aclacinomycin analogs, epsilon-pyrromycinone glycosides, rhodirubins (A, B, C and E) and all triglycosides containing L-cinerulose, L-rhodinose or 2-deoxy-L-fucose as terminal sugar. This chain is Aclacinomycin-N/aclacinomycin-A oxidase, found in Streptomyces galilaeus.